We begin with the raw amino-acid sequence, 390 residues long: Flap endonuclease 1-2 (390 aa).

Positions 1 to 108 (MGIHQLMQFL…GELARRKKLK (108 aa)) are N-domain. D34 serves as a coordination point for Mg(2+). DNA is bound at residue R74. 5 residues coordinate Mg(2+): D90, E162, E164, D183, and D185. The tract at residues 126 to 254 (QALLQNQRTT…GTAYKLIKEY (129 aa)) is I-domain. DNA is bound at residue E162. Residues G232 and D234 each contribute to the DNA site. Position 234 (D234) interacts with Mg(2+). Positions 348–356 (FQSRLENFF) are interaction with PCNA. The disordered stretch occupies residues 359-390 (TTKIIHPNNSKAKAKSNKKTEQPQKSGGKKKI).

The protein belongs to the XPG/RAD2 endonuclease family. FEN1 subfamily. Interacts with PCNA. Three molecules of FEN1 bind to one PCNA trimer with each molecule binding to one PCNA monomer. PCNA stimulates the nuclease activity without altering cleavage specificity. It depends on Mg(2+) as a cofactor. Post-translationally, phosphorylated. Phosphorylation upon DNA damage induces relocalization to the nuclear plasma.

It is found in the nucleus. It localises to the nucleolus. The protein resides in the nucleoplasm. The protein localises to the mitochondrion. Functionally, structure-specific nuclease with 5'-flap endonuclease and 5'-3' exonuclease activities involved in DNA replication and repair. During DNA replication, cleaves the 5'-overhanging flap structure that is generated by displacement synthesis when DNA polymerase encounters the 5'-end of a downstream Okazaki fragment. It enters the flap from the 5'-end and then tracks to cleave the flap base, leaving a nick for ligation. Also involved in the long patch base excision repair (LP-BER) pathway, by cleaving within the apurinic/apyrimidinic (AP) site-terminated flap. Acts as a genome stabilization factor that prevents flaps from equilibrating into structures that lead to duplications and deletions. Also possesses 5'-3' exonuclease activity on nicked or gapped double-stranded DNA, and exhibits RNase H activity. Also involved in replication and repair of rDNA and in repairing mitochondrial DNA. The chain is Flap endonuclease 1-2 from Paramecium tetraurelia.